The sequence spans 258 residues: Ubiquinone/menaquinone biosynthesis C-methyltransferase UbiE (258 aa).

Residues 1 to 20 (MSESRTSADGGMETSYGFRE) form a disordered region. Residues Thr81, Asp102, and 130–131 (NA) contribute to the S-adenosyl-L-methionine site.

The protein belongs to the class I-like SAM-binding methyltransferase superfamily. MenG/UbiE family.

The enzyme catalyses a 2-demethylmenaquinol + S-adenosyl-L-methionine = a menaquinol + S-adenosyl-L-homocysteine + H(+). It carries out the reaction a 2-methoxy-6-(all-trans-polyprenyl)benzene-1,4-diol + S-adenosyl-L-methionine = a 5-methoxy-2-methyl-3-(all-trans-polyprenyl)benzene-1,4-diol + S-adenosyl-L-homocysteine + H(+). Its pathway is quinol/quinone metabolism; menaquinone biosynthesis; menaquinol from 1,4-dihydroxy-2-naphthoate: step 2/2. It participates in cofactor biosynthesis; ubiquinone biosynthesis. Its function is as follows. Methyltransferase required for the conversion of demethylmenaquinol (DMKH2) to menaquinol (MKH2) and the conversion of 2-polyprenyl-6-methoxy-1,4-benzoquinol (DDMQH2) to 2-polyprenyl-3-methyl-6-methoxy-1,4-benzoquinol (DMQH2). In Rhizobium etli (strain CIAT 652), this protein is Ubiquinone/menaquinone biosynthesis C-methyltransferase UbiE.